Consider the following 264-residue polypeptide: Short chain dehydrogenase/reductase dmxR18 (264 aa).

The NADP(+) site is built by Ile24, Asp70, Asn97, and Arg130. Residues Ser146 and Ser147 each act as proton donor in the active site. The NADP(+) site is built by Tyr161, Lys165, and Thr196. Residue Tyr161 is the Proton acceptor of the active site. The Lowers pKa of active site Tyr role is filled by Lys165.

This sequence belongs to the short-chain dehydrogenases/reductases (SDR) family.

The enzyme catalyses 3,8,9,10-tetrahydroxy-6-methyl-1,4-dihydroanthracen-1-one + NADPH + H(+) = (3R)-3,8,9,10-tetrahydroxy-6-methyl-1,2,3,4-tetrahydroanthracen-1-one + NADP(+). It functions in the pathway secondary metabolite biosynthesis. In terms of biological role, short chain dehydrogenase/reductase; part of the gene cluster that mediates the biosynthesis of the dimeric xanthones cryptosporioptides. The pathway begins with the synthesis of atrochrysone thioester by the polyketide synthase dmx-nrPKS. The atrochrysone carboxyl ACP thioesterase dmxR1 then breaks the thioester bond and releases the atrochrysone carboxylic acid from dmx-nrPKS. Atrochrysone carboxylic acid is decarboxylated by the decarboxylase dmxR15, and oxidized by the anthrone oxygenase dmxR16 to yield emodin. Emodin is then reduced to emodin hydroquinone by the oxidoreductase dmxR7. A-ring reduction by the short chain dehydrogenase dmxR18, dehydration by the scytalone dehydratase-like protein dmxR17 and probable spontaneous re-oxidation, results in overall deoxygenation to chrysophanol. Baeyer-Villiger oxidation by the Baeyer-Villiger monooxygenase (BVMO) dmxR6 then yields monodictylactone in equilibrium with monodictyphenone. In the case of the cryptosporioptides biosynthesis, monodictylactone is reduced at C-12 to an alcohol (by the short chain dehydrogenases dmxR12 or dmxR8) and hydroxylated at C-5 by dmxR9, yielding the electron-rich aromatic which could eliminate H(2)O to form the ortho-quinonemethide, followed by tautomerisation to paraquinone and complete the formal reduction to produce the 10-methylgroup. Conjugate addition of C-4a-OH to the resulting paraquinone by the monooxygenase dmxR10 then gives cyclohexadienone, which is then reduced at C-5 by the short chain dehydrogenase dmxR3 to give the dihydroxanthone. The 6,7-epoxide in the cryptosporioptides could be introduced by the cytochrome P450 monooxygenase dmxL3. The highly reducing PKS dmxL2 manufactures butyrate, which is further carboxylated by dmxL1 to form ethylmalonate. It is not yet clear whether the carboxylation occurs while the butyrate is attached to the ACP of dmxL2, but this unusual fungal metabolite could then be esterified to O-5 by the O-acetyltransferase dmxR13. Finally, dimerization performed by dmxR5 gives the observed dimers cryptosporioptides A, B and C as the final products of the pathway. In Cryptosporiopsis sp. (strain 8999), this protein is Short chain dehydrogenase/reductase dmxR18.